The sequence spans 135 residues: Large ribosomal subunit protein uL16c (135 aa).

Over residues 1-23 (MLSPKKTKFRKEHRGRMKGRSSR) the composition is skewed to basic residues. Positions 1–24 (MLSPKKTKFRKEHRGRMKGRSSRG) are disordered.

The protein belongs to the universal ribosomal protein uL16 family. As to quaternary structure, part of the 50S ribosomal subunit.

It is found in the plastid. Its subcellular location is the chloroplast. The sequence is that of Large ribosomal subunit protein uL16c from Pelargonium hortorum (Common geranium).